The following is a 74-amino-acid chain: ATP synthase F(1) complex subunit epsilon, mitochondrial (74 aa).

This sequence belongs to the eukaryotic ATPase epsilon family. In terms of assembly, component of the ATP synthase complex composed at least of ATP5F1A/subunit alpha, ATP5F1B/subunit beta, ATP5MC1/subunit c (homooctomer), MT-ATP6/subunit a, MT-ATP8/subunit 8, ATP5ME/subunit e, ATP5MF/subunit f, ATP5MG/subunit g, ATP5MK/subunit k, ATP5MJ/subunit j, ATP5F1C/subunit gamma, ATP5F1D/subunit delta, ATP5F1E/subunit epsilon, ATP5PF/subunit F6, ATP5PB/subunit b, ATP5PD/subunit d, ATP5PO/subunit OSCP. ATP synthase complex consists of a soluble F(1) head domain (subunits alpha(3) and beta(3)) - the catalytic core - and a membrane F(0) domain - the membrane proton channel (subunits c, a, 8, e, f, g, k and j). These two domains are linked by a central stalk (subunits gamma, delta, and epsilon) rotating inside the F1 region and a stationary peripheral stalk (subunits F6, b, d, and OSCP).

Its subcellular location is the mitochondrion. It is found in the mitochondrion inner membrane. In terms of biological role, subunit epsilon, of the mitochondrial membrane ATP synthase complex (F(1)F(0) ATP synthase or Complex V) that produces ATP from ADP in the presence of a proton gradient across the membrane which is generated by electron transport complexes of the respiratory chain. ATP synthase complex consist of a soluble F(1) head domain - the catalytic core - and a membrane F(1) domain - the membrane proton channel. These two domains are linked by a central stalk rotating inside the F(1) region and a stationary peripheral stalk. During catalysis, ATP synthesis in the catalytic domain of F(1) is coupled via a rotary mechanism of the central stalk subunits to proton translocation. In vivo, can only synthesize ATP although its ATP hydrolase activity can be activated artificially in vitro. May be essential for the assembly of F(1) and may play an important role in the incorporation of the hydrophobic subunit c into the F(1)-c oligomer rotor of the mitochondrial ATP synthase complex. The polypeptide is ATP synthase F(1) complex subunit epsilon, mitochondrial (Dictyostelium discoideum (Social amoeba)).